The primary structure comprises 237 residues: MQKKSIELKSNNFTLLVLYLNNQNIDLINQSLYKKIQECPKFFKNAPIIVNVSKLCNTVDWKKIKKIIISHGFFVVGVSGCQDGILKKNIIDSGLPILSERKNNKSNIITNFFINSYKNKKKETINKVEKTHIIDIPVRSGQKIYAKHADLIVINNVSAGAELVADGNIHVYGIVRGRVLAGANGDTSRKIFCTGLFAELVSISGEYWLSDQIPSEFIGKSAQIYLKNKFLTINSLS.

It belongs to the MinC family. As to quaternary structure, interacts with MinD and FtsZ.

Its function is as follows. Cell division inhibitor that blocks the formation of polar Z ring septums. Rapidly oscillates between the poles of the cell to destabilize FtsZ filaments that have formed before they mature into polar Z rings. Prevents FtsZ polymerization. The polypeptide is Probable septum site-determining protein MinC (Buchnera aphidicola subsp. Acyrthosiphon pisum (strain 5A)).